Reading from the N-terminus, the 265-residue chain is 5'-nucleotidase SurE (265 aa).

A divalent metal cation contacts are provided by Asp8, Asp9, Ser40, and Asn98.

Belongs to the SurE nucleotidase family. The cofactor is a divalent metal cation.

The protein resides in the cytoplasm. It catalyses the reaction a ribonucleoside 5'-phosphate + H2O = a ribonucleoside + phosphate. In terms of biological role, nucleotidase that shows phosphatase activity on nucleoside 5'-monophosphates. The chain is 5'-nucleotidase SurE from Thermosynechococcus vestitus (strain NIES-2133 / IAM M-273 / BP-1).